Here is a 292-residue protein sequence, read N- to C-terminus: MNTESLALDFKSATLYAIRVVLHDADTTRLRAALDKRMADAGSFFENEPVVIDATRVDAPVDWPALLQALADHNLPPIGVVAEGANLQGARDAGLVPVELSTSVARAPQVIDTAPPNDVATPVPSVPEATAEATAKAGPQDDEADGEQADEAPAHNPESVPTRAARETTEANRPTATPPQSSSALVITKPLRSGQRVYARHTDLIVIGMVSQGAEVIADGNVHVYGPLRGKAMAGARGDTSARIFTTQLDAELLAVAGVYRVVEDKLDRALHNQPALVRLDGDTLRIEALKG.

The interval Gln-109 to Thr-188 is disordered. Residues Gln-140–Asp-150 show a composition bias toward acidic residues. Over residues Ala-171–Leu-185 the composition is skewed to polar residues.

This sequence belongs to the MinC family. As to quaternary structure, interacts with MinD and FtsZ.

Its function is as follows. Cell division inhibitor that blocks the formation of polar Z ring septums. Rapidly oscillates between the poles of the cell to destabilize FtsZ filaments that have formed before they mature into polar Z rings. Prevents FtsZ polymerization. The polypeptide is Probable septum site-determining protein MinC (Bordetella pertussis (strain Tohama I / ATCC BAA-589 / NCTC 13251)).